Consider the following 268-residue polypeptide: Nitrite transporter NirC (268 aa).

Residues 1–25 lie on the Cytoplasmic side of the membrane; it reads MFTDTINKCAANAARIARLSANNPL. A helical membrane pass occupies residues 26–46; the sequence is GFWVSSAMAGAYVGLGIILIF. At 47 to 59 the chain is on the periplasmic side; sequence TLGNLLDPSVRPL. Residues 60 to 80 traverse the membrane as a helical segment; that stretch reads VMGATFGIALTLVIIAGSELF. Topologically, residues 81 to 112 are cytoplasmic; that stretch reads TGHTMFLTFGVKAGSISHGQMWAILPQTWLGN. The helical transmembrane segment at 113–133 threads the bilayer; that stretch reads LVGSVFVAMLYSWGGGSLLPV. Topologically, residues 134 to 151 are periplasmic; that stretch reads DTSIVHSVALAKTTAPAM. The helical transmembrane segment at 152–172 threads the bilayer; it reads VLFFKGALCNWLVCLAIWMAL. Over 173-179 the chain is Cytoplasmic; that stretch reads RTEGAAK. Residues 180–200 traverse the membrane as a helical segment; the sequence is FIAIWWCLLAFIASGYEHSIA. Over 201–225 the chain is Periplasmic; it reads NMTLFALSWFGNHSEAYTLAGIGHN. The helical transmembrane segment at 226-246 threads the bilayer; it reads LLWVTLGNTLSGAVFMGLGYW. Over 247 to 268 the chain is Cytoplasmic; it reads YATPKANRPVADKFNQTETAAG.

It belongs to the FNT transporter (TC 1.A.16) family.

Its subcellular location is the cell inner membrane. In terms of biological role, catalyzes nitrite uptake and nitrite export across the cytoplasmic membrane. Is up to 10-fold more active than NarK or NarU in nitrite uptake for subsequent reduction in the cytoplasm by the NirB/NirD nitrite reductase. In Escherichia coli (strain K12), this protein is Nitrite transporter NirC (nirC).